Reading from the N-terminus, the 145-residue chain is UPF0735 ACT domain-containing protein CKL_0858 (145 aa).

The 76-residue stretch at 69–144 (TLGLTLAHKA…SVIKVNLAAV (76 aa)) folds into the ACT domain.

The protein belongs to the UPF0735 family.

In Clostridium kluyveri (strain ATCC 8527 / DSM 555 / NBRC 12016 / NCIMB 10680 / K1), this protein is UPF0735 ACT domain-containing protein CKL_0858.